The following is a 93-amino-acid chain: Cobalt transport protein CbiN (93 aa).

Transmembrane regions (helical) follow at residues 5–25 (LMLLAMVVALVILPFFINHGG) and 63–83 (LLFTLQGSLGAAVIFYILGYC).

Belongs to the CbiN family. Forms an energy-coupling factor (ECF) transporter complex composed of an ATP-binding protein (A component, CbiO), a transmembrane protein (T component, CbiQ) and 2 possible substrate-capture proteins (S components, CbiM and CbiN) of unknown stoichimetry.

The protein resides in the cell inner membrane. Its pathway is cofactor biosynthesis; adenosylcobalamin biosynthesis. Functionally, part of the energy-coupling factor (ECF) transporter complex CbiMNOQ involved in cobalt import. This Salmonella arizonae (strain ATCC BAA-731 / CDC346-86 / RSK2980) protein is Cobalt transport protein CbiN.